A 156-amino-acid polypeptide reads, in one-letter code: MNLNATLFAQMVVFLVLAWFTMKFVWPPLINALDERSKKIADGLAAAEKGKAELEAAHKRVDQELAQARNDGQQRIADAEKRALAVADEIKTNAQAEAARIIAQAKAEAEQQIVKARETLRGEVAALAVKGAEQILKREVDQTAHAELLNQLKAEL.

Residues 7–29 form a helical membrane-spanning segment; it reads LFAQMVVFLVLAWFTMKFVWPPL.

This sequence belongs to the ATPase B chain family. In terms of assembly, F-type ATPases have 2 components, F(1) - the catalytic core - and F(0) - the membrane proton channel. F(1) has five subunits: alpha(3), beta(3), gamma(1), delta(1), epsilon(1). F(0) has three main subunits: a(1), b(2) and c(10-14). The alpha and beta chains form an alternating ring which encloses part of the gamma chain. F(1) is attached to F(0) by a central stalk formed by the gamma and epsilon chains, while a peripheral stalk is formed by the delta and b chains.

The protein localises to the cell inner membrane. In terms of biological role, f(1)F(0) ATP synthase produces ATP from ADP in the presence of a proton or sodium gradient. F-type ATPases consist of two structural domains, F(1) containing the extramembraneous catalytic core and F(0) containing the membrane proton channel, linked together by a central stalk and a peripheral stalk. During catalysis, ATP synthesis in the catalytic domain of F(1) is coupled via a rotary mechanism of the central stalk subunits to proton translocation. Functionally, component of the F(0) channel, it forms part of the peripheral stalk, linking F(1) to F(0). The protein is ATP synthase subunit b of Burkholderia pseudomallei (strain 668).